A 529-amino-acid polypeptide reads, in one-letter code: Peptide chain release factor 3 (529 aa).

Positions A11–M280 constitute a tr-type G domain. GTP contacts are provided by residues S20–T27, D88–H92, and N142–D145.

The protein belongs to the TRAFAC class translation factor GTPase superfamily. Classic translation factor GTPase family. PrfC subfamily.

Its subcellular location is the cytoplasm. Its function is as follows. Increases the formation of ribosomal termination complexes and stimulates activities of RF-1 and RF-2. It binds guanine nucleotides and has strong preference for UGA stop codons. It may interact directly with the ribosome. The stimulation of RF-1 and RF-2 is significantly reduced by GTP and GDP, but not by GMP. In Yersinia enterocolitica serotype O:8 / biotype 1B (strain NCTC 13174 / 8081), this protein is Peptide chain release factor 3.